The sequence spans 280 residues: Formyltetrahydrofolate deformylase (280 aa).

The ACT domain maps to 8–86 (VLRTICPDQK…RELNPAGRRR (79 aa)). Asp225 is an active-site residue.

It belongs to the PurU family.

It catalyses the reaction (6R)-10-formyltetrahydrofolate + H2O = (6S)-5,6,7,8-tetrahydrofolate + formate + H(+). Its pathway is purine metabolism; IMP biosynthesis via de novo pathway; formate from 10-formyl-5,6,7,8-tetrahydrofolate: step 1/1. Its function is as follows. Catalyzes the hydrolysis of 10-formyltetrahydrofolate (formyl-FH4) to formate and tetrahydrofolate (FH4). The polypeptide is Formyltetrahydrofolate deformylase (Escherichia coli O6:H1 (strain CFT073 / ATCC 700928 / UPEC)).